Here is a 385-residue protein sequence, read N- to C-terminus: F-box only protein 4 (385 aa).

A phosphoserine mark is found at serine 11 and serine 46. The 47-residue stretch at 54–100 (TSALTRLPVDVQLYILSFLSPHDLCQLGSTDHYWNKTIRDPILWRYF) folds into the F-box domain.

As to quaternary structure, homodimer. Part of the SCF (SKP1-CUL1-F-box) E3 ubiquitin-protein ligase complex SCF(FBXO4) formed of CUL1, SKP1, RBX1 and FBXO4. Interacts with TERF1; this interaction is prevented in the presence of GNL3L. Identified in a complex with CRYAB and CCND1. Phosphorylation at Ser-11 varies during the cell cycle. It is low in resting cells and high in the S phase and the G2/M phase of the cell cycle. Phosphorylation is decreased during late G1 phase. Phosphorylation at Ser-11 is important for homodimerization and for optimal ubiquitin ligase activity towards CCND1.

The protein resides in the cytoplasm. The protein operates within protein modification; protein ubiquitination. Its function is as follows. Substrate recognition component of a SCF (SKP1-CUL1-F-box protein) E3 ubiquitin-protein ligase complex that mediates the ubiquitination and subsequent proteasomal degradation of target proteins. Promotes ubiquitination of cyclin-D1 (CCND1) and its subsequent proteasomal degradation. However, it does not act as a major regulator of CCND1 stability during the G1/S transition. Recognizes TERF1 and promotes its ubiquitination together with UBE2D1. Promotes ubiquitination of FXR1 following phosphorylation of FXR1 by GSK3B, leading to FXR1 degradation by the proteasome. The chain is F-box only protein 4 from Mus musculus (Mouse).